We begin with the raw amino-acid sequence, 1308 residues long: Spermatogenesis-associated protein 31F1B (1308 aa).

The helical transmembrane segment at 7-27 threads the bilayer; that stretch reads FLWDTECPLYVYFCFFIIVLI. Disordered stretches follow at residues 464–488, 627–648, 844–863, 902–927, 1005–1026, 1084–1190, and 1204–1254; these read SPPIPLPEAAPPPSSTSPNESLDEP, SQPGKPEAYGSGDTFLPTAGKG, HGAQGHGRTEKVPPERQPLL, PTATDLESESVQEPLGSPRESTLLQG, FSTESQSPGKSKSGYVPTVAGK, GACP…AGLK, and MKSK…PKAQ. The span at 465-478 shows a compositional bias: pro residues; the sequence is PPIPLPEAAPPPSS. Acidic residues predominate over residues 1107–1117; sequence METDSEQDMED.

It belongs to the SPATA31 family.

It is found in the membrane. In Mus musculus (Mouse), this protein is Spermatogenesis-associated protein 31F1B.